A 142-amino-acid polypeptide reads, in one-letter code: Putative transmembrane protein INAFM1 (142 aa).

A compositionally biased stretch (gly residues) spans 1 to 19 (MRGTSCVGGGAESPGGAGL). The disordered stretch occupies residues 1-22 (MRGTSCVGGGAESPGGAGLSEG). Residues 36 to 56 (YFLCVSLAAVLLAVYYGLIWV) form a helical membrane-spanning segment. Disordered regions lie at residues 61-83 (PAAP…PGVP) and 99-142 (VPGG…RRPG). The segment covering 64 to 83 (PAGPQPSAPSPPCAARPGVP) has biased composition (pro residues). The segment covering 99–111 (VPGGPRPQLQLPL) has biased composition (low complexity). Over residues 117–142 (YSDPDRRPSRQTPRETPEAAEGRRPG) the composition is skewed to basic and acidic residues.

The protein resides in the membrane. The protein is Putative transmembrane protein INAFM1 of Homo sapiens (Human).